A 119-amino-acid polypeptide reads, in one-letter code: MPRVKGGTVTRKRRKKVLKLAKGYFGSKHTLYKVANQQVMKSGNYAFRDRRQKKRDFRKLWITRINAAARMNGLSYSRLMHGLKLSGIEVNRKMLADLAVNDLTAFNQLADAAKAQLNK.

The protein belongs to the bacterial ribosomal protein bL20 family. In terms of assembly, part of the 50S ribosomal subunit.

In terms of biological role, binds directly to 23S ribosomal RNA and is necessary for the in vitro assembly process of the 50S ribosomal subunit. It is not involved in the protein synthesizing functions of that subunit. This chain is Large ribosomal subunit protein bL20 (rplT), found in Bacillus subtilis (strain 168).